The following is a 555-amino-acid chain: 2-succinyl-5-enolpyruvyl-6-hydroxy-3-cyclohexene-1-carboxylate synthase (555 aa).

It belongs to the TPP enzyme family. MenD subfamily. In terms of assembly, homodimer. Mg(2+) serves as cofactor. Mn(2+) is required as a cofactor. It depends on thiamine diphosphate as a cofactor.

The catalysed reaction is isochorismate + 2-oxoglutarate + H(+) = 5-enolpyruvoyl-6-hydroxy-2-succinyl-cyclohex-3-ene-1-carboxylate + CO2. Its pathway is quinol/quinone metabolism; 1,4-dihydroxy-2-naphthoate biosynthesis; 1,4-dihydroxy-2-naphthoate from chorismate: step 2/7. It functions in the pathway quinol/quinone metabolism; menaquinone biosynthesis. In terms of biological role, catalyzes the thiamine diphosphate-dependent decarboxylation of 2-oxoglutarate and the subsequent addition of the resulting succinic semialdehyde-thiamine pyrophosphate anion to isochorismate to yield 2-succinyl-5-enolpyruvyl-6-hydroxy-3-cyclohexene-1-carboxylate (SEPHCHC). This chain is 2-succinyl-5-enolpyruvyl-6-hydroxy-3-cyclohexene-1-carboxylate synthase, found in Bacteroides thetaiotaomicron (strain ATCC 29148 / DSM 2079 / JCM 5827 / CCUG 10774 / NCTC 10582 / VPI-5482 / E50).